Consider the following 529-residue polypeptide: Bifunctional purine biosynthesis protein PurH (529 aa).

One can recognise an MGS-like domain in the interval 1–148 (MQQRRPVRRA…KNHKDVAIVV (148 aa)).

It belongs to the PurH family.

The enzyme catalyses (6R)-10-formyltetrahydrofolate + 5-amino-1-(5-phospho-beta-D-ribosyl)imidazole-4-carboxamide = 5-formamido-1-(5-phospho-D-ribosyl)imidazole-4-carboxamide + (6S)-5,6,7,8-tetrahydrofolate. The catalysed reaction is IMP + H2O = 5-formamido-1-(5-phospho-D-ribosyl)imidazole-4-carboxamide. Its pathway is purine metabolism; IMP biosynthesis via de novo pathway; 5-formamido-1-(5-phospho-D-ribosyl)imidazole-4-carboxamide from 5-amino-1-(5-phospho-D-ribosyl)imidazole-4-carboxamide (10-formyl THF route): step 1/1. It functions in the pathway purine metabolism; IMP biosynthesis via de novo pathway; IMP from 5-formamido-1-(5-phospho-D-ribosyl)imidazole-4-carboxamide: step 1/1. This is Bifunctional purine biosynthesis protein PurH from Klebsiella pneumoniae subsp. pneumoniae (strain ATCC 700721 / MGH 78578).